Consider the following 474-residue polypeptide: 4-O-methyl-glucuronoyl methylesterase (474 aa).

An N-terminal signal peptide occupies residues 1–17 (MFKPSFVALALVSYATA). A CBM1 domain is found at 19–55 (ASAPQWGQCGGIGWTGPTACPSGWACQQLNAYYSQCL). Positions 61–91 (APARTTAAPPPPPATTAAPPPPTTSAPTGSS) are disordered. A compositionally biased stretch (pro residues) spans 68-84 (APPPPPATTAAPPPPTT). Asn-120 carries an N-linked (GlcNAc...) asparagine glycan. The GXSYXG catalytic site motif motif lies at 284 to 289 (GCSRDG). 2 disulfides stabilise this stretch: Cys-285–Cys-421 and Cys-317–Cys-393. Residue Ser-286 is the Nucleophile of the active site. Substrate is bound by residues Lys-290, Gln-332, Glu-340, and Trp-384. The Proton donor/acceptor role is filled by His-420.

Belongs to the carbohydrate esterase 15 (CE15) family. In terms of processing, N-glycosylated.

It localises to the secreted. The catalysed reaction is a 4-O-methyl-alpha-D-glucuronosyl ester derivative + H2O = 4-O-methyl-alpha-D-glucuronate derivative + an alcohol + H(+). Glucuronoyl esterase which may play a significant role in biomass degradation, as it is considered to disconnect hemicellulose from lignin through the hydrolysis of the ester bond between 4-O-methyl-D-glucuronic acid residues of glucuronoxylans and aromatic alcohols of lignin. In Cerrena unicolor (Canker rot fungus), this protein is 4-O-methyl-glucuronoyl methylesterase.